A 122-amino-acid chain; its full sequence is Autophagy-related protein 8e (122 aa).

A lipid anchor (Phosphatidylethanolamine amidated glycine) is attached at Gly-118. Positions 119–122 are cleaved as a propeptide — removed in mature form; that stretch reads ASSI.

This sequence belongs to the ATG8 family. Interacts with ATG4. Interacts with SH3P2. Interacts with ATG1A and ATG11. Binds to ATG1A and ATG11 on autophagic vesicles. Post-translationally, the C-terminal 4 residues are removed by ATG4 to expose Gly-118 at the C-terminus. This Gly-118 forms then a thioester bond with the 'Cys-558' of ATG7 (E1-like activating enzyme) before being transferred to the 'Cys-258' of ATG3 (the specific E2 conjugating enzyme), in order to be finally amidated with phosphatidylethanolamine. This lipid modification anchors ATG8 to autophagosomes. In terms of tissue distribution, constitutively expressed.

The protein resides in the cytoplasmic vesicle. Its subcellular location is the autophagosome membrane. The protein localises to the vacuole membrane. It is found in the cytoplasm. It localises to the cytoskeleton. Its function is as follows. Ubiquitin-like modifier involved in autophagosomes formation. May mediate the delivery of the autophagosomes to the vacuole via the microtubule cytoskeleton. The sequence is that of Autophagy-related protein 8e (ATG8E) from Arabidopsis thaliana (Mouse-ear cress).